Reading from the N-terminus, the 1220-residue chain is Plasma membrane calcium-transporting ATPase 3 (1220 aa).

Residues 1-20 (MGDMANSSIEFHPKPQQQRD) are compositionally biased toward polar residues. The interval 1–23 (MGDMANSSIEFHPKPQQQRDVPQ) is disordered. Topologically, residues 1–97 (MGDMANSSIE…NFIPPKQPKT (97 aa)) are cytoplasmic. Serine 8 is modified (phosphoserine). A helical membrane pass occupies residues 98–118 (FLQLVWEALQDVTLIILEVAA). Residues 119–155 (IVSLGLSFYAPPGEESEACGNVSGGAEDEGEAEAGWI) are Extracellular-facing. Residues 156–176 (EGAAILLSVICVVLVTAFNDW) form a helical membrane-spanning segment. The Cytoplasmic portion of the chain corresponds to 177 to 364 (SKEKQFRGLQ…KEKSVLQGKL (188 aa)). Residues 298–355 (EEEKKDKKGKQQDGAMESSQTKAKKQDGAVAMEMQPLKSAEGGEMEEREKKKANAPKK) form a disordered region. 2 stretches are compositionally biased toward basic and acidic residues: residues 299–308 (EEKKDKKGKQ) and 342–355 (MEEREKKKANAPKK). The chain crosses the membrane as a helical span at residues 365–384 (TKLAVQIGKAGLVMSAITVI). Residues 385–417 (ILVLYFVIETFVVEGRTWLAECTPVYVQYFVKF) lie on the Extracellular side of the membrane. A helical membrane pass occupies residues 418–435 (FIIGVTVLVVAVPEGLPL). At 436–849 (AVTISLAYSV…MWGRNVYDSI (414 aa)) the chain is on the cytoplasmic side. Aspartate 473 acts as the 4-aspartylphosphate intermediate in catalysis. The Mg(2+) site is built by aspartate 794 and aspartate 798. The helical transmembrane segment at 850–869 (SKFLQFQLTVNVVAVIVAFT) threads the bilayer. At 870 to 879 (GACITQDSPL) the chain is on the extracellular side. Residues 880–900 (KAVQMLWVNLIMDTFASLALA) form a helical membrane-spanning segment. Residues 901 to 920 (TEPPTESLLLRKPYGRDKPL) lie on the Cytoplasmic side of the membrane. A helical transmembrane segment spans residues 921–943 (ISRTMMKNILGHAVYQLAIIFTL). Over 944–961 (LFVGELFFDIDSGRNAPL) the chain is Extracellular. The chain crosses the membrane as a helical span at residues 962–983 (HSPPSEHYTIIFNTFVMMQLFN). The Cytoplasmic portion of the chain corresponds to 984–1002 (EINARKIHGERNVFDGIFS). Residues 1003–1024 (NPIFCTIVLGTFGIQIVIVQFG) traverse the membrane as a helical segment. At 1025–1034 (GKPFSCSPLS) the chain is on the extracellular side. Residues 1035–1056 (TEQWLWCLFVGVGELVWGQVIA) form a helical membrane-spanning segment. Topologically, residues 1057-1220 (TIPTSQLKCL…SPLHSVETSL (164 aa)) are cytoplasmic. Threonine 1079 carries the phosphothreonine modification. A calmodulin-binding subdomain A region spans residues 1097–1114 (LRRGQILWFRGLNRIQTQ). Threonine 1113 is modified (phosphothreonine; by PKC). The tract at residues 1115–1124 (IRVVKAFRSS) is calmodulin-binding subdomain B. A disordered region spans residues 1166–1186 (ENEERLRAPPPPSPNQNNNAI).

It belongs to the cation transport ATPase (P-type) (TC 3.A.3) family. Type IIB subfamily. As to quaternary structure, interacts with PDZD11. Interacts (via N-terminus) with YWHAE. Highly expressed in the cerebellum. Expressed in adrenal glands.

The protein resides in the cell membrane. Its subcellular location is the presynaptic cell membrane. The catalysed reaction is Ca(2+)(in) + ATP + H2O = Ca(2+)(out) + ADP + phosphate + H(+). Its activity is regulated as follows. Down-regulated by YWHAE. Functionally, ATP-driven Ca(2+) ion pump involved in the maintenance of basal intracellular Ca(2+) levels at the presynaptic terminals. Uses ATP as an energy source to transport cytosolic Ca(2+) ions across the plasma membrane to the extracellular compartment. May counter-transport protons, but the mechanism and the stoichiometry of this Ca(2+)/H(+) exchange remains to be established. The protein is Plasma membrane calcium-transporting ATPase 3 of Homo sapiens (Human).